The sequence spans 192 residues: Dihydrofolate reductase (192 aa).

The DHFR domain maps to 5 to 191; that stretch reads NVAIIVAALK…FTYNYTLWTR (187 aa). Residues alanine 11 and 18 to 24 each bind NADP(+); that span reads GIGYKGK. 32–37 is a binding site for substrate; that stretch reads EIRYFK. Residue 56 to 58 coordinates NADP(+); sequence RKT. Arginine 72 contacts substrate. NADP(+) is bound at residue 78–80; that stretch reads SRS. The substrate site is built by isoleucine 112 and tyrosine 118. NADP(+) is bound at residue 113–120; that stretch reads GGAEIYNE.

The protein belongs to the dihydrofolate reductase family.

The catalysed reaction is (6S)-5,6,7,8-tetrahydrofolate + NADP(+) = 7,8-dihydrofolate + NADPH + H(+). Its pathway is cofactor biosynthesis; tetrahydrofolate biosynthesis; 5,6,7,8-tetrahydrofolate from 7,8-dihydrofolate: step 1/1. Key enzyme in folate metabolism. Catalyzes an essential reaction for de novo glycine and purine synthesis, and for DNA precursor synthesis. In Candida albicans (Yeast), this protein is Dihydrofolate reductase (DFR1).